A 311-amino-acid chain; its full sequence is MHPTRSFQGLILTLHNYWAEHGCAILQPYDMEVGAGTFHPATTLRSLGPKPWKAAYVQPSRRPKDGRYGENPNRLQHYYQYQVIIKPSPPNLQDLYLGSLRAIGLDPTLHDVRFVEDDWESPTLGAWGLGWECWCDGMEVSQFTYFQQVCGIECSPVSGELTYGLERLAMYVQGVDNVYDLNFNGLEGDEKVTYGEVFLQAEQEYSRYNFEMANTEALRQHFIDAERECEAILKAGAPGPNANHQMHKSVFPAYDQCIKASHVFNLMDARGVISVTERQSYILRVRNLARQCGEAFLLTDAGGFNFKREGE.

The protein belongs to the class-II aminoacyl-tRNA synthetase family. In terms of assembly, tetramer of two alpha and two beta subunits.

The protein resides in the cytoplasm. The enzyme catalyses tRNA(Gly) + glycine + ATP = glycyl-tRNA(Gly) + AMP + diphosphate. This is Glycine--tRNA ligase alpha subunit from Brucella anthropi (strain ATCC 49188 / DSM 6882 / CCUG 24695 / JCM 21032 / LMG 3331 / NBRC 15819 / NCTC 12168 / Alc 37) (Ochrobactrum anthropi).